A 187-amino-acid chain; its full sequence is uncharacterized protein (187 aa).

The stretch at 127-172 (KQPQVTLTQLQEELDEAKTRLALKEKELLEALSEISKLRLQLSNQL) forms a coiled coil.

This is an uncharacterized protein from Tomato torrado virus (isolate Solanum lycopersicum/Spain/PRIToTV0301/-) (ToTV).